Reading from the N-terminus, the 39-residue chain is Photosystem II reaction center protein L (39 aa).

The chain crosses the membrane as a helical span at residues 18–38; the sequence is SLYWGLLLIFVLAVLFSNYFF.

Belongs to the PsbL family. In terms of assembly, PSII is composed of 1 copy each of membrane proteins PsbA, PsbB, PsbC, PsbD, PsbE, PsbF, PsbH, PsbI, PsbJ, PsbK, PsbL, PsbM, PsbT, PsbX, PsbY, PsbZ, Psb30/Ycf12, at least 3 peripheral proteins of the oxygen-evolving complex and a large number of cofactors. It forms dimeric complexes.

It is found in the plastid thylakoid membrane. One of the components of the core complex of photosystem II (PSII). PSII is a light-driven water:plastoquinone oxidoreductase that uses light energy to abstract electrons from H(2)O, generating O(2) and a proton gradient subsequently used for ATP formation. It consists of a core antenna complex that captures photons, and an electron transfer chain that converts photonic excitation into a charge separation. This subunit is found at the monomer-monomer interface and is required for correct PSII assembly and/or dimerization. This is Photosystem II reaction center protein L from Cuscuta gronovii (Common dodder).